The sequence spans 900 residues: Chaperone protein ClpB 2 (900 aa).

The region spanning 15–154 (PDRFSDPAWE…ESLLRQPSVS (140 aa)) is the Clp R domain. Repeat regions lie at residues 18-81 (FSDP…LADQ) and 91-154 (IGED…PSVS). The tract at residues 151-183 (PSVSPAPAPPPVPTAASAPAPTPRSAPAPRVMA) is disordered. Positions 154-163 (SPAPAPPPVP) are enriched in pro residues. Residues 191–376 (ELEREPSALE…RRFQQVLIRE (186 aa)) form an NBD1 region. 244–251 (GEPGVGKT) contacts ATP. Positions 377 to 581 (PDLELSLEIL…IADLVARWTG (205 aa)) are linker. Residues 427–557 (IDLIDEAAAQ…LEASQAEAQS (131 aa)) are a coiled coil. Positions 591-803 (ERRKLLALES…RIDEVIRFRP (213 aa)) are NBD2. 641–648 (GPTGVGKT) contributes to the ATP binding site. Residues 804 to 900 (LKVKDLVRIV…GASLEFEPLE (97 aa)) form a C-terminal region.

Belongs to the ClpA/ClpB family. As to quaternary structure, homohexamer. The oligomerization is ATP-dependent.

It localises to the cytoplasm. In terms of biological role, part of a stress-induced multi-chaperone system, it is involved in the recovery of the cell from heat-induced damage, in cooperation with DnaK, DnaJ and GrpE. Acts before DnaK, in the processing of protein aggregates. Protein binding stimulates the ATPase activity; ATP hydrolysis unfolds the denatured protein aggregates, which probably helps expose new hydrophobic binding sites on the surface of ClpB-bound aggregates, contributing to the solubilization and refolding of denatured protein aggregates by DnaK. The protein is Chaperone protein ClpB 2 (clpB2) of Parasynechococcus marenigrum (strain WH8102).